The sequence spans 299 residues: GTP cyclohydrolase FolE2 (299 aa).

This sequence belongs to the GTP cyclohydrolase IV family.

The catalysed reaction is GTP + H2O = 7,8-dihydroneopterin 3'-triphosphate + formate + H(+). The protein operates within cofactor biosynthesis; 7,8-dihydroneopterin triphosphate biosynthesis; 7,8-dihydroneopterin triphosphate from GTP: step 1/1. Functionally, converts GTP to 7,8-dihydroneopterin triphosphate. In Citrobacter koseri (strain ATCC BAA-895 / CDC 4225-83 / SGSC4696), this protein is GTP cyclohydrolase FolE2.